We begin with the raw amino-acid sequence, 263 residues long: 3-methyl-2-oxobutanoate hydroxymethyltransferase (263 aa).

Residues Asp-44 and Asp-83 each contribute to the Mg(2+) site. Residues 44-45, Asp-83, and Lys-112 each bind 3-methyl-2-oxobutanoate; that span reads DS. Glu-114 is a binding site for Mg(2+). The Proton acceptor role is filled by Glu-181.

This sequence belongs to the PanB family. Homodecamer; pentamer of dimers. The cofactor is Mg(2+).

It localises to the cytoplasm. The catalysed reaction is 3-methyl-2-oxobutanoate + (6R)-5,10-methylene-5,6,7,8-tetrahydrofolate + H2O = 2-dehydropantoate + (6S)-5,6,7,8-tetrahydrofolate. It functions in the pathway cofactor biosynthesis; (R)-pantothenate biosynthesis; (R)-pantoate from 3-methyl-2-oxobutanoate: step 1/2. Its function is as follows. Catalyzes the reversible reaction in which hydroxymethyl group from 5,10-methylenetetrahydrofolate is transferred onto alpha-ketoisovalerate to form ketopantoate. The protein is 3-methyl-2-oxobutanoate hydroxymethyltransferase of Sulfurimonas denitrificans (strain ATCC 33889 / DSM 1251) (Thiomicrospira denitrificans (strain ATCC 33889 / DSM 1251)).